We begin with the raw amino-acid sequence, 90 residues long: uncharacterized protein (90 aa).

An N-terminal signal peptide occupies residues 1–20 (MEKLFVLVFALTLLAFSSEA). Residues 31 to 50 (QLLRSRRQDRPSKPGFPDEP) form a disordered region.

Its subcellular location is the secreted. This is an uncharacterized protein from Rattus norvegicus (Rat).